Consider the following 539-residue polypeptide: Dihydrolipoyllysine-residue acetyltransferase component 3 of pyruvate dehydrogenase complex, mitochondrial (539 aa).

A mitochondrion-targeting transit peptide spans 1 to 102 (MAYASRIINH…SCLMQSARGF (102 aa)). The Lipoyl-binding domain maps to 111 to 187 (HQEIGMPSLS…QVGEVIAITV (77 aa)). K152 is modified (N6-lipoyllysine). The tract at residues 195 to 247 (KFKDYTPSSTADAAPTKAEPTPAPPKEEKVKQPSSPPEPKASKPSTPPTGDRV) is disordered. Residues 204 to 214 (TADAAPTKAEP) show a composition bias toward low complexity. The Peripheral subunit-binding (PSBD) domain maps to 248–285 (FASPLARKLAEDNNVPLSDIEGTGPEGRIVKADIDEYL). Catalysis depends on residues H512 and D516.

The protein belongs to the 2-oxoacid dehydrogenase family. It depends on (R)-lipoate as a cofactor.

It localises to the mitochondrion matrix. The catalysed reaction is N(6)-[(R)-dihydrolipoyl]-L-lysyl-[protein] + acetyl-CoA = N(6)-[(R)-S(8)-acetyldihydrolipoyl]-L-lysyl-[protein] + CoA. In terms of biological role, the pyruvate dehydrogenase complex catalyzes the overall conversion of pyruvate to acetyl-CoA and CO(2). It contains multiple copies of three enzymatic components: pyruvate dehydrogenase (E1), dihydrolipoamide acetyltransferase (E2) and lipoamide dehydrogenase (E3). This is Dihydrolipoyllysine-residue acetyltransferase component 3 of pyruvate dehydrogenase complex, mitochondrial from Arabidopsis thaliana (Mouse-ear cress).